A 604-amino-acid chain; its full sequence is uncharacterized protein (604 aa).

Residues 49 to 332 (LILVMLMVVI…LANQFNTMLS (284 aa)) enclose the ABC transmembrane type-1 domain. A run of 4 helical transmembrane segments spans residues 50–70 (ILVM…PFVI), 86–106 (LIPV…SLWF), 172–192 (VITF…LTLI), and 288–308 (IAAI…SIVV). The 235-residue stretch at 366–600 (IEFRDVSFGY…KGFYSDLYES (235 aa)) folds into the ABC transporter domain. 399–406 (GPTGAGKT) contributes to the ATP binding site. Residues 510–530 (LISIARAVLADPVLLILDEAT) traverse the membrane as a helical segment.

Belongs to the ABC transporter superfamily.

The protein localises to the cell membrane. This is an uncharacterized protein from Bacillus subtilis (strain 168).